A 690-amino-acid polypeptide reads, in one-letter code: Methionine--tRNA ligase (690 aa).

The 'HIGH' region signature appears at 20-30 (PYANGSIHLGH). Positions 151, 154, 164, and 167 each coordinate Zn(2+). The 'KMSKS' region signature appears at 337–341 (KMSKS). Residue lysine 340 coordinates ATP. One can recognise a tRNA-binding domain in the interval 589-690 (DFAKVDLRIA…EGAQPGMRVM (102 aa)).

Belongs to the class-I aminoacyl-tRNA synthetase family. MetG type 1 subfamily. Homodimer. Requires Zn(2+) as cofactor.

It is found in the cytoplasm. It catalyses the reaction tRNA(Met) + L-methionine + ATP = L-methionyl-tRNA(Met) + AMP + diphosphate. Is required not only for elongation of protein synthesis but also for the initiation of all mRNA translation through initiator tRNA(fMet) aminoacylation. The protein is Methionine--tRNA ligase of Vibrio vulnificus (strain CMCP6).